A 305-amino-acid polypeptide reads, in one-letter code: HTH-type transcriptional regulator KdgR (305 aa).

Positions 55–116 (VSSVLKVFGI…GESEKYSLTL (62 aa)) constitute an HTH iclR-type domain. A DNA-binding region (H-T-H motif) is located at residues 76 to 95 (ITELSQRVMMSKSTVYRFLQ). In terms of domain architecture, IclR-ED spans 131-300 (LIRSADIQMR…ARNISDQMGY (170 aa)).

In terms of assembly, homodimer.

The protein resides in the cytoplasm. Transcriptional repressor that negatively regulates the expression of genes involved in pectinolysis and in pectinase secretion. Controls genes involved in pectin catabolism, including the pectinase genes (pelA, pelB, pelC, pelE), genes involved in pectin catabolism (kdgT, ogl, kduI-kdgF) and the outT gene involved in pectinase secretion. Acts by binding directly to KdgR binding sites (KdgR-box) in the gene operator/promoter region. The sequence is that of HTH-type transcriptional regulator KdgR from Dickeya chrysanthemi (Pectobacterium chrysanthemi).